Consider the following 114-residue polypeptide: Ig kappa chain V-I region S107A (114 aa).

The tract at residues 1 to 23 (DIVMTQSPTFLAVTASKKVTISC) is framework-1. An intrachain disulfide couples Cys-23 to Cys-94. Residues 24 to 40 (TASESLYSSKHKVHYLA) form a complementarity-determining-1 region. Residues 41–55 (WYQKKPEQSPKLLIY) form a framework-2 region. The complementarity-determining-2 stretch occupies residues 56-62 (GASNRYI). A framework-3 region spans residues 63-94 (GVPDRFTGSGSGTDFTLTISSVQVEDLTHYYC). A complementarity-determining-3 region spans residues 95-103 (AQFYSYPLT). The tract at residues 104–113 (FGAGTKLELK) is framework-4.

Anti-phosphocholine antibody. In Mus musculus (Mouse), this protein is Ig kappa chain V-I region S107A (Igkv7-33).